Reading from the N-terminus, the 160-residue chain is Phosphopantetheine adenylyltransferase (160 aa).

Ser9 provides a ligand contact to substrate. ATP-binding positions include 9–10 (SF) and His17. Substrate-binding residues include Lys41, Val73, and Lys87. Residues 88 to 90 (GLR), Glu98, and 122 to 128 (YSFVSSS) contribute to the ATP site.

Belongs to the bacterial CoaD family. In terms of assembly, homohexamer. Mg(2+) is required as a cofactor.

It is found in the cytoplasm. It carries out the reaction (R)-4'-phosphopantetheine + ATP + H(+) = 3'-dephospho-CoA + diphosphate. Its pathway is cofactor biosynthesis; coenzyme A biosynthesis; CoA from (R)-pantothenate: step 4/5. Functionally, reversibly transfers an adenylyl group from ATP to 4'-phosphopantetheine, yielding dephospho-CoA (dPCoA) and pyrophosphate. This is Phosphopantetheine adenylyltransferase from Mycobacterium leprae (strain TN).